A 651-amino-acid polypeptide reads, in one-letter code: p-hydroxybenzoic acid efflux pump subunit AaeB (651 aa).

A run of 11 helical transmembrane segments spans residues 11–31 (FACK…WFEM), 41–61 (AAIV…SGAI), 65–85 (GLLR…IIMT), 91–111 (VVML…SSLV), 117–137 (YVFA…QSSP), 150–170 (EIIL…PRSV), 367–387 (LFWL…LGVV), 404–424 (FLIG…LVLP), 428–448 (QSLL…GIEI), 454–474 (GSLG…PMTF), and 480–500 (LDNA…IMLI).

Belongs to the aromatic acid exporter ArAE (TC 2.A.85) family.

The protein resides in the cell inner membrane. Forms an efflux pump with AaeA. Could function as a metabolic relief valve, allowing to eliminate certain compounds when they accumulate to high levels in the cell. The sequence is that of p-hydroxybenzoic acid efflux pump subunit AaeB from Musicola paradisiaca (strain Ech703) (Dickeya paradisiaca).